The primary structure comprises 189 residues: Interferon alpha-17 (189 aa).

The N-terminal stretch at 1-23 is a signal peptide; the sequence is MALSFSLLMAVLVLSYKSICSLG. 2 cysteine pairs are disulfide-bonded: C24-C122 and C52-C162.

Belongs to the alpha/beta interferon family.

The protein localises to the secreted. In terms of biological role, produced by macrophages, IFN-alpha have antiviral activities. Interferon stimulates the production of two enzymes: a protein kinase and an oligoadenylate synthetase. The protein is Interferon alpha-17 (IFNA17) of Homo sapiens (Human).